The sequence spans 354 residues: Elongation factor Ts, mitochondrial (354 aa).

Residues 1 to 47 (MMRSTLSLLQKCRLPNNNGSLLSFKNNQVVNQTALFSMKSNQQYRFY) constitute a mitochondrion transit peptide.

Belongs to the EF-Ts family.

The protein localises to the mitochondrion. Functionally, associates with the EF-Tu.GDP complex and induces the exchange of GDP to GTP. It remains bound to the aminoacyl-tRNA.EF-Tu.GTP complex up to the GTP hydrolysis stage on the ribosome. The sequence is that of Elongation factor Ts, mitochondrial (tsfm) from Heterostelium pallidum (strain ATCC 26659 / Pp 5 / PN500) (Cellular slime mold).